The sequence spans 87 residues: uncharacterized protein (87 aa).

The helical transmembrane segment at Ile-63 to Phe-83 threads the bilayer.

The protein localises to the membrane. This is an uncharacterized protein from Dictyostelium discoideum (Social amoeba).